Here is a 226-residue protein sequence, read N- to C-terminus: Putative ankyrin repeat protein RF_0939 (226 aa).

4 ANK repeats span residues 56–86 (VSTT…NVNM), 91–120 (FKDT…AVNG), 125–154 (LLGP…AVDQ), and 157–194 (SGET…DTNA).

This Rickettsia felis (strain ATCC VR-1525 / URRWXCal2) (Rickettsia azadi) protein is Putative ankyrin repeat protein RF_0939.